The following is a 135-amino-acid chain: Ig heavy chain V region XIG14 (135 aa).

The first 18 residues, 1-18 (DFIIFFIFMFFSPSCILS), serve as a signal peptide directing secretion. The 109-residue stretch at 20–128 (TLQESGPGTV…GYNFDYWGQG (109 aa)) folds into the Ig-like domain.

In Xenopus laevis (African clawed frog), this protein is Ig heavy chain V region XIG14.